We begin with the raw amino-acid sequence, 85 residues long: Neutrophil elastase 2A (85 aa).

Residues 1–85 (IVGGRAAEPH…VAQGVFSFVR (85 aa)) enclose the Peptidase S1 domain. Ser67 serves as the catalytic Charge relay system.

Belongs to the peptidase S1 family. Elastase subfamily.

Its function is as follows. May be involved in the degradation of connective tissue in chronic lung disease. The sequence is that of Neutrophil elastase 2A from Equus caballus (Horse).